A 344-amino-acid polypeptide reads, in one-letter code: S-adenosylmethionine:tRNA ribosyltransferase-isomerase (344 aa).

This sequence belongs to the QueA family. As to quaternary structure, monomer.

It localises to the cytoplasm. It catalyses the reaction 7-aminomethyl-7-carbaguanosine(34) in tRNA + S-adenosyl-L-methionine = epoxyqueuosine(34) in tRNA + adenine + L-methionine + 2 H(+). It participates in tRNA modification; tRNA-queuosine biosynthesis. Its function is as follows. Transfers and isomerizes the ribose moiety from AdoMet to the 7-aminomethyl group of 7-deazaguanine (preQ1-tRNA) to give epoxyqueuosine (oQ-tRNA). The chain is S-adenosylmethionine:tRNA ribosyltransferase-isomerase from Lactiplantibacillus plantarum (strain ATCC BAA-793 / NCIMB 8826 / WCFS1) (Lactobacillus plantarum).